The primary structure comprises 677 residues: MLSSTDFTSASWELVVRVDHPNEEQQKDVTLRVSGDLHVGGVMLQLVEQINISQDWSDFALWWEQKHCWLLKTHWTLDKYGVQADAKLLFTPQHKMLRLRLPNLKMVRLRVSFSAVVFKAVSDICKTLNIRRSEELSLLKPCGDYFKKKKKKDKNNKEPITEDILNLESSPTASVSSVSPGLYSKTMTPIYDPINGTPASSTMTWFSDSPLTEQNCSILAFSQPPQSSEALADMYQPRSLVDKAKLNAGWLDSSRSLMEQGIQEDGQLLLRFKYYSFFDLNPKYDAVRINQLYEQARWAILLEEIDCTEEEMLIFAALQYHISKLSLSAETQDFTSESEVDEIEAALSNLEVTLEGGKADSLLEDITDIPKLADNLKLFRPKKLLLKAFKQYWFVFKDTSIAYFKNKELEQGEPLEKLNLRGCEVVPNVNVAERKFGIKLLIPVADGMNEMYLRCDHENQYAQWMAACMLASKGKTMADSSYRPEVLNILSFLRMKNRNSASQVASSPENMDMNPECFVSPRCAKKHKSKQLAARILEAHQNVAQMPLVEAKLRFIQAWQSLPEFGLTYYLVRFKGSKKDDILGVSYNRLIKIDAATGIPVTTWRFTNIKQWNVSWETRQVVIEFDQNVFTAFTCLSADCKIVHEYIGGYIFLSTRSKDQNETLDEDLFHKLTGGQD.

Positions 96–653 (MLRLRLPNLK…HEYIGGYIFL (558 aa)) constitute an FERM domain. A phosphoserine mark is found at serine 170, serine 179, and serine 361. The PH domain maps to 337–433 (ESEVDEIEAA…EVVPNVNVAE (97 aa)).

The protein belongs to the kindlin family. In terms of assembly, interacts with the cytoplasmic domain of integrins ITGB1 and ITGB3.

Its subcellular location is the cytoplasm. The protein localises to the cytoskeleton. It localises to the cell junction. The protein resides in the focal adhesion. It is found in the cell projection. Its subcellular location is the ruffle membrane. In terms of biological role, involved in cell adhesion. Contributes to integrin activation. When coexpressed with talin, potentiates activation of ITGA2B. Required for normal keratinocyte proliferation. Required for normal polarization of basal keratinocytes in skin, and for normal cell shape. Required for normal adhesion of keratinocytes to fibronectin and laminin, and for normal keratinocyte migration to wound sites. The polypeptide is Fermitin family homolog 1 (FERMT1) (Pongo abelii (Sumatran orangutan)).